Here is a 117-residue protein sequence, read N- to C-terminus: UPF0122 protein Teth39_1278 (117 aa).

This sequence belongs to the UPF0122 family.

Might take part in the signal recognition particle (SRP) pathway. This is inferred from the conservation of its genetic proximity to ftsY/ffh. May be a regulatory protein. This Thermoanaerobacter pseudethanolicus (strain ATCC 33223 / 39E) (Clostridium thermohydrosulfuricum) protein is UPF0122 protein Teth39_1278.